The primary structure comprises 187 residues: Ubiquinone biosynthesis protein COQ4 homolog, mitochondrial (187 aa).

His-77, Asp-78, His-81, and Glu-93 together coordinate Zn(2+).

The protein belongs to the COQ4 family. Component of a multi-subunit COQ enzyme complex. Zn(2+) serves as cofactor.

The protein localises to the mitochondrion inner membrane. It carries out the reaction a 4-hydroxy-3-methoxy-5-(all-trans-polyprenyl)benzoate + H(+) = a 2-methoxy-6-(all-trans-polyprenyl)phenol + CO2. It functions in the pathway cofactor biosynthesis; ubiquinone biosynthesis. Its function is as follows. Lyase that catalyzes the C1-decarboxylation of 4-hydroxy-3-methoxy-5-(all-trans-polyprenyl)benzoic acid into 2-methoxy-6-(all-trans-polyprenyl)phenol during ubiquinone biosynthesis. The polypeptide is Ubiquinone biosynthesis protein COQ4 homolog, mitochondrial (Leishmania infantum).